The sequence spans 387 residues: Phosphoglycerate kinase (387 aa).

Residues 21–23 (DLN), arginine 36, 59–62 (HLGR), arginine 113, and arginine 146 contribute to the substrate site. ATP-binding positions include lysine 197, glutamate 314, and 340 to 343 (GGDT).

The protein belongs to the phosphoglycerate kinase family. Monomer.

It localises to the cytoplasm. The catalysed reaction is (2R)-3-phosphoglycerate + ATP = (2R)-3-phospho-glyceroyl phosphate + ADP. It participates in carbohydrate degradation; glycolysis; pyruvate from D-glyceraldehyde 3-phosphate: step 2/5. The chain is Phosphoglycerate kinase from Pectobacterium atrosepticum (strain SCRI 1043 / ATCC BAA-672) (Erwinia carotovora subsp. atroseptica).